A 370-amino-acid polypeptide reads, in one-letter code: 3-isopropylmalate dehydrogenase (370 aa).

77 to 90 (GPKWDSVPYEVRPE) is a binding site for NAD(+). Substrate contacts are provided by Arg97, Arg107, Arg135, and Asp226. 3 residues coordinate Mg(2+): Asp226, Asp250, and Asp254. 290–302 (GSAPDIAGKGIAN) contacts NAD(+).

Belongs to the isocitrate and isopropylmalate dehydrogenases family. LeuB type 1 subfamily. In terms of assembly, homodimer. The cofactor is Mg(2+). Mn(2+) serves as cofactor.

It is found in the cytoplasm. It carries out the reaction (2R,3S)-3-isopropylmalate + NAD(+) = 4-methyl-2-oxopentanoate + CO2 + NADH. The protein operates within amino-acid biosynthesis; L-leucine biosynthesis; L-leucine from 3-methyl-2-oxobutanoate: step 3/4. In terms of biological role, catalyzes the oxidation of 3-carboxy-2-hydroxy-4-methylpentanoate (3-isopropylmalate) to 3-carboxy-4-methyl-2-oxopentanoate. The product decarboxylates to 4-methyl-2 oxopentanoate. This Rhizobium etli (strain ATCC 51251 / DSM 11541 / JCM 21823 / NBRC 15573 / CFN 42) protein is 3-isopropylmalate dehydrogenase.